The chain runs to 269 residues: Shikimate dehydrogenase (NADP(+)) (269 aa).

Residues 17–19 (SKS) and T64 contribute to the shikimate site. The Proton acceptor role is filled by K68. E80 is an NADP(+) binding site. 2 residues coordinate shikimate: N89 and D105. Residues 130-134 (GAGGA), 154-159 (NRTRAK), and M213 each bind NADP(+). Shikimate is bound at residue Y215. G237 contributes to the NADP(+) binding site.

Belongs to the shikimate dehydrogenase family. As to quaternary structure, homodimer.

It catalyses the reaction shikimate + NADP(+) = 3-dehydroshikimate + NADPH + H(+). Its pathway is metabolic intermediate biosynthesis; chorismate biosynthesis; chorismate from D-erythrose 4-phosphate and phosphoenolpyruvate: step 4/7. Functionally, involved in the biosynthesis of the chorismate, which leads to the biosynthesis of aromatic amino acids. Catalyzes the reversible NADPH linked reduction of 3-dehydroshikimate (DHSA) to yield shikimate (SA). This Neisseria lactamica protein is Shikimate dehydrogenase (NADP(+)).